Here is a 390-residue protein sequence, read N- to C-terminus: MQFAKRLEKIPPYLFAEINRKREALIAQGVDIINIGVGDPDKPTPAHILQAMREAIDEASNHNYPPYEGTQEFREAAVKWMERRFGVVDLNPNTEVVSSIGSKEAIHNTFLAFVEAGDYTLIPDPGYPVYRTSTIFAGGEPFTMPLKAENKFLPDLDLIPEEVARKAKMLWVNYPNNPTGALATLEFFEELVAFCQQHSILLCHDHAYSEMAYDGYKPPSVLQIPGAKDIAIEFHSLSKSYNMTGWRIGFAVGNAYAIQGLSQVKTNVDSGVFKAIQKAAIAAYNTDEVELQAVMSVYQNRRDIIVKGLQSLGWPIEPPKATLYVWVPVPPGYTSTEFTTLLLDKCGIVVPPGVGYGVSGEGYFRIALTICEERLHEAIQRMQDAGIRYS.

The substrate site is built by Tyr-13 and Gly-38. Pyridoxal 5'-phosphate contacts are provided by residues Tyr-67, 102-103, Tyr-127, Asn-177, Tyr-208, and 236-238; these read SK and SLS. Residues Lys-103, Tyr-127, and Asn-177 each contribute to the substrate site. Lys-239 is subject to N6-(pyridoxal phosphate)lysine. Arg-247 is a binding site for pyridoxal 5'-phosphate. Arg-365 provides a ligand contact to substrate.

This sequence belongs to the class-I pyridoxal-phosphate-dependent aminotransferase family. LL-diaminopimelate aminotransferase subfamily. Homodimer. Pyridoxal 5'-phosphate is required as a cofactor.

It carries out the reaction (2S,6S)-2,6-diaminopimelate + 2-oxoglutarate = (S)-2,3,4,5-tetrahydrodipicolinate + L-glutamate + H2O + H(+). It participates in amino-acid biosynthesis; L-lysine biosynthesis via DAP pathway; LL-2,6-diaminopimelate from (S)-tetrahydrodipicolinate (aminotransferase route): step 1/1. Involved in the synthesis of meso-diaminopimelate (m-DAP or DL-DAP), required for both lysine and peptidoglycan biosynthesis. Catalyzes the direct conversion of tetrahydrodipicolinate to LL-diaminopimelate. The polypeptide is LL-diaminopimelate aminotransferase 2 (Trichormus variabilis (strain ATCC 29413 / PCC 7937) (Anabaena variabilis)).